Consider the following 490-residue polypeptide: Ribulose bisphosphate carboxylase large chain (490 aa).

Residues N127 and T177 each coordinate substrate. Catalysis depends on K179, which acts as the Proton acceptor. K181 lines the substrate pocket. 3 residues coordinate Mg(2+): K205, D207, and E208. K205 carries the post-translational modification N6-carboxylysine. Residue H297 is the Proton acceptor of the active site. The substrate site is built by R298, H330, and S382.

It belongs to the RuBisCO large chain family. Type I subfamily. Heterohexadecamer of 8 large chains and 8 small chains. Mg(2+) is required as a cofactor.

It localises to the plastid. Its subcellular location is the chloroplast. The enzyme catalyses 2 (2R)-3-phosphoglycerate + 2 H(+) = D-ribulose 1,5-bisphosphate + CO2 + H2O. The catalysed reaction is D-ribulose 1,5-bisphosphate + O2 = 2-phosphoglycolate + (2R)-3-phosphoglycerate + 2 H(+). RuBisCO catalyzes two reactions: the carboxylation of D-ribulose 1,5-bisphosphate, the primary event in carbon dioxide fixation, as well as the oxidative fragmentation of the pentose substrate in the photorespiration process. Both reactions occur simultaneously and in competition at the same active site. The polypeptide is Ribulose bisphosphate carboxylase large chain (Phaeodactylum tricornutum (strain CCAP 1055/1)).